Reading from the N-terminus, the 681-residue chain is Chaperone protein htpG (681 aa).

The a; substrate-binding stretch occupies residues 1-326 (MQKGNIGVTT…SPDIPLNVSR (326 aa)). Residues 327–545 (SYLQSDSNVK…YMRRMKEMAN (219 aa)) are b. Residues 546–681 (IQAGMSFYGE…NFVKRSIELI (136 aa)) are c. The tract at residues 601 to 620 (DALKKKQEGKKDEDIPTAEK) is disordered.

Belongs to the heat shock protein 90 family. In terms of assembly, homodimer.

The protein resides in the cytoplasm. In terms of biological role, molecular chaperone. Has ATPase activity. The chain is Chaperone protein htpG from Bacteroides fragilis (strain 638R).